Reading from the N-terminus, the 631-residue chain is MAPPGSSAVFLLALTITASVQALTPTHYLTKQDVERLKASLDRPFTDLESAFYSIVGLSSLGVQVPDVKKACTFIKSNLDPSNVDSLFYAAQSSQVLSGCEISVSNETKELLLAAVSEDSPIAQIYHAVAALSGFGLPLASNEALGALTARLGKEETVLATVQALQTASHLSQQADLRNIVEEIEDLVARLDELGGVYLQFEEGLELTALFVAATYKLMDHVGTEPSMKEDQVIQLMNTIFSKKNFESLSEAFSVASAAAALSQNRYHVPVVVVPEGSTSDTQEQAILRLQVSNVLSQPLAQAAVKLEHAKSAATRATVLQKTPFSLVGNVFELNFKNVKLSSGYYDFSVRVEGDSRYIANTVELRVKISTEVGITNVDLSTVDKDQSIAPKTTRVTYPAKAKGTFIADSHQNFALFFQLVDVNTGAELTPHQTFVRLHNQKTGQEVVFVAEPDNKNVYKFELDTSERKIEFDSASGTYTLYLIIGDATLKNPILWNVADVVIKFPEEEAPSTVLSQSLFTPKQEIQHLFREPEKRPPTVVSNTFTALILSPLLLLFALWIRIGANVSNFTFAPSTVIFHLGHAAMLGLMYIYWTQLNMFQTLKYLAVLGTVTFLAGNRMLAQHAVKRTAH.

An N-terminal signal peptide occupies residues 1-22 (MAPPGSSAVFLLALTITASVQA). Residues 23-540 (LTPTHYLTKQ…REPEKRPPTV (518 aa)) lie on the Lumenal side of the membrane. Asparagine 106 is a glycosylation site (N-linked (GlcNAc...) asparagine). Lysine 154 participates in a covalent cross-link: Glycyl lysine isopeptide (Lys-Gly) (interchain with G-Cter in ubiquitin). Residues 541 to 561 (VSNTFTALILSPLLLLFALWI) traverse the membrane as a helical segment. Residues 562 to 571 (RIGANVSNFT) are Cytoplasmic-facing. A helical transmembrane segment spans residues 572-592 (FAPSTVIFHLGHAAMLGLMYI). Residues 593 to 596 (YWTQ) are Lumenal-facing. A helical membrane pass occupies residues 597–617 (LNMFQTLKYLAVLGTVTFLAG). The Cytoplasmic portion of the chain corresponds to 618–631 (NRMLAQHAVKRTAH).

The protein belongs to the SWP1 family. Component of the oligosaccharyltransferase (OST) complex. OST exists in two different complex forms which contain common core subunits RPN1, RPN2, OST48, OST4, DAD1 and TMEM258, either STT3A or STT3B as catalytic subunits, and form-specific accessory subunits. STT3A complex assembly occurs through the formation of 3 subcomplexes. Subcomplex 1 contains RPN1 and TMEM258, subcomplex 2 contains the STT3A-specific subunits STT3A, DC2/OSTC, and KCP2 as well as the core subunit OST4, and subcomplex 3 contains RPN2, DAD1, and OST48. The STT3A complex can form stable complexes with the Sec61 complex or with both the Sec61 and TRAP complexes. Interacts with DDI2. Interacts with TMEM35A/NACHO.

It localises to the endoplasmic reticulum. It is found in the endoplasmic reticulum membrane. It participates in protein modification; protein glycosylation. Its function is as follows. Subunit of the oligosaccharyl transferase (OST) complex that catalyzes the initial transfer of a defined glycan (Glc(3)Man(9)GlcNAc(2) in eukaryotes) from the lipid carrier dolichol-pyrophosphate to an asparagine residue within an Asn-X-Ser/Thr consensus motif in nascent polypeptide chains, the first step in protein N-glycosylation. N-glycosylation occurs cotranslationally and the complex associates with the Sec61 complex at the channel-forming translocon complex that mediates protein translocation across the endoplasmic reticulum (ER). All subunits are required for a maximal enzyme activity. The protein is Dolichyl-diphosphooligosaccharide--protein glycosyltransferase subunit 2 of Mus musculus (Mouse).